A 364-amino-acid chain; its full sequence is Leucine-rich repeat-containing protein 19 (364 aa).

An N-terminal signal peptide occupies residues 1-20; that stretch reads MKVTRFMFWLFSMLLPSVKS. The Extracellular portion of the chain corresponds to 21–264; sequence QASETEVPCN…SEHEPLGKSW (244 aa). N-linked (GlcNAc...) asparagine glycans are attached at residues asparagine 30, asparagine 35, asparagine 46, and asparagine 88. 6 LRR repeats span residues 44–69, 70–93, 94–117, 118–141, 143–163, and 164–190; these read STNVTILDLSYNRITLNAADSRVLQM, YSLLTELYLMENNIIALYNSSFRN, LLNLEILNICGNSISVIQQGSFVG, LNELKQLFLCQNKILQLNPDTFVP, NNLKVLNLQGNLIRLFDAPQL, and PHLEILTLDGNPWNCTCGLLELHNWLN. Positions 174-225 constitute an LRRCT domain; sequence NPWNCTCGLLELHNWLNTSNVTLENENMTMCSYPDELKHDSIKSAPFTTECH. 7 N-linked (GlcNAc...) asparagine glycosylation sites follow: asparagine 177, asparagine 190, asparagine 193, asparagine 200, asparagine 241, asparagine 245, and asparagine 250. A helical membrane pass occupies residues 265–285; the sequence is AFLVGVVATVLLTSLLIFIAI. Residues 286–364 are Cytoplasmic-facing; it reads KCPVWYNILL…IDINEVHEEK (79 aa).

In terms of assembly, interacts with TRAF2 and TRAF6. In terms of tissue distribution, strongly expressed in kidney, also expressed in spleen, intestine and colon. Highly expressed in epithelial cells. In kidney, mainly expressed in renal collecting duct epithelial cells.

The protein localises to the membrane. With respect to regulation, activated by TLR ligands such as LPS, bacterial DNA and peptidoglycan. Functionally, pathogen-recognition receptor which mediates the activation of TRAF2- and TRAF6 NF-kappa-B signaling pathways and induces the expression of pro-inflammatory cytokines. In kidney, prevents infection by uropathogenic bacteria by inducing the production of cytokines, chemokines and antimicrobial substances. In gut, involved in host-microbiota interactions, plays a critical role in promoting the recruitment of immune cells and intestinal inflammation. The polypeptide is Leucine-rich repeat-containing protein 19 (Mus musculus (Mouse)).